The following is a 1381-amino-acid chain: DNA-directed RNA polymerase subunit beta'' (1381 aa).

Zn(2+) is bound by residues C224, C295, C302, and C305.

The protein belongs to the RNA polymerase beta' chain family. RpoC2 subfamily. As to quaternary structure, in plastids the minimal PEP RNA polymerase catalytic core is composed of four subunits: alpha, beta, beta', and beta''. When a (nuclear-encoded) sigma factor is associated with the core the holoenzyme is formed, which can initiate transcription. Zn(2+) serves as cofactor.

It localises to the plastid. It is found in the chloroplast. The enzyme catalyses RNA(n) + a ribonucleoside 5'-triphosphate = RNA(n+1) + diphosphate. Functionally, DNA-dependent RNA polymerase catalyzes the transcription of DNA into RNA using the four ribonucleoside triphosphates as substrates. This Guizotia abyssinica (Niger) protein is DNA-directed RNA polymerase subunit beta''.